Here is a 1049-residue protein sequence, read N- to C-terminus: Desmoglein-1 (1049 aa).

Residues 1 to 23 (MDWSFFRVVAMLFIFLVVVEVNS) form the signal peptide. The propeptide occupies 24–49 (EFRIQVRDYNTKNGTIKWHSIRRQKR). Asn-36, Asn-110, and Asn-180 each carry an N-linked (GlcNAc...) asparagine glycan. 4 consecutive Cadherin domains span residues 50-158 (EWIK…PVFS), 159-270 (MATF…PYME), 271-385 (QSSY…GPVF), and 386-497 (RPGS…TEPN). Residues 50–548 (EWIKFAAACR…LLSDNVHFGP (499 aa)) are Extracellular-facing. The segment at 485–534 (SFGNDDRTNTEPNTKITTNTGRQESTSSTNYDTSTTSTDSSQVYSSEPGN) is disordered. The span at 494 to 508 (TEPNTKITTNTGRQE) shows a compositional bias: polar residues. Residues 509 to 530 (STSSTNYDTSTTSTDSSQVYSS) are compositionally biased toward low complexity. The chain crosses the membrane as a helical span at residues 549 to 569 (AGIGLLIMGFLVLGLVPFLMI). The Cytoplasmic portion of the chain corresponds to 570–1049 (CCDCGGAPRS…TKYSTVQYSK (480 aa)). Ser-579 carries the phosphoserine modification. Desmoglein repeat repeat units follow at residues 813-839 (TYPS…TVTE), 840-869 (SYTT…ERVV), 870-899 (GPIS…ERVI), 900-927 (APSS…ERVI), and 928-956 (QPTS…ERVV). The interval 1014 to 1035 (HMRSSSDHHFNQTIGSASPSTA) is disordered. The span at 1024–1035 (NQTIGSASPSTA) shows a compositional bias: polar residues.

Binds to JUP/plakoglobin. Interacts with PKP2. Interacts with DSC3; there is evidence to suggest that the interaction promotes cell-cell adhesion of keratinocytes. In terms of assembly, (Microbial infection) Interacts with Staphylococcus aureus protein SdrD; this interaction increases S.aureus adherence to keratinocytes. In terms of tissue distribution, expressed in all suprabasal layers of the epidermis, with the highest expression seen in the granular layer (at protein level).

It localises to the cell membrane. It is found in the cell junction. The protein localises to the desmosome. The protein resides in the cytoplasm. Its subcellular location is the nucleus. Its function is as follows. Component of intercellular desmosome junctions. Involved in the interaction of plaque proteins and intermediate filaments mediating cell-cell adhesion. The polypeptide is Desmoglein-1 (DSG1) (Homo sapiens (Human)).